A 317-amino-acid polypeptide reads, in one-letter code: Non-structural protein 2 (317 aa).

ATP-binding positions include serine 107–arginine 109, lysine 188, and histidine 221–lysine 223. Residues leucine 205–valine 241 are RNA-binding. The For NTPase and RTPase activities role is filled by histidine 225. Residue arginine 227 participates in ATP binding.

The protein belongs to the rotavirus NSP2 family. Homooctamer. Interacts with VP1; this interaction is weak. Interacts with NSP5; this interaction leads to up-regulation of NSP5 phosphorylation and formation of viral factories. Interacts with host DCP1A, DCP1B, DDX6, EDC4 and EIF2S1/eIF2-alpha; these interactions are probably part of the sequestration of some host SGs and PBs proteins in viral factories. Requires Mg(2+) as cofactor.

The protein localises to the host cytoplasm. Its function is as follows. Participates in replication and packaging of the viral genome. Plays a crucial role, together with NSP5, in the formation of virus factories (viroplasms), which are large inclusions in the host cytoplasm where replication intermediates are assembled and viral RNA replication takes place. Displays ssRNA binding, NTPase, RNA triphosphatase (RTPase) and ATP-independent helix-unwinding activities. The unwinding activity may prepare and organize plus-strand RNAs for packaging and replication by removing interfering secondary structures. The RTPase activity plays a role in the removal of the gamma-phosphate from the rotavirus RNA minus strands of dsRNA genome segments. Participates in the selective exclusion of host proteins from stress granules (SG) and P bodies (PB). Also participates in the sequestration of these remodeled organelles in viral factories. The chain is Non-structural protein 2 from Rotavirus A (strain RVA/Human/United States/Wa/1974/G1P1A[8]) (RV-A).